Here is a 283-residue protein sequence, read N- to C-terminus: Nucleoid occlusion protein (283 aa).

The H-T-H motif DNA-binding region spans 142-161; sequence ESLAQRLGKGQSTIANKLRL.

Belongs to the ParB family.

It localises to the cytoplasm. It is found in the nucleoid. Functionally, effects nucleoid occlusion by binding relatively nonspecifically to DNA and preventing the assembly of the division machinery in the vicinity of the nucleoid, especially under conditions that disturb the cell cycle. It helps to coordinate cell division and chromosome segregation by preventing the formation of the Z ring through the nucleoid, which would cause chromosome breakage. This Shouchella clausii (strain KSM-K16) (Alkalihalobacillus clausii) protein is Nucleoid occlusion protein.